A 540-amino-acid chain; its full sequence is tRNA-2-methylthio-N(6)-dimethylallyladenosine synthase (540 aa).

In terms of domain architecture, MTTase N-terminal spans 41 to 157; sequence RTYEVRTFGC…LPTLLERSAH (117 aa). [4Fe-4S] cluster contacts are provided by Cys50, Cys86, Cys120, Cys194, Cys198, and Cys201. Positions 180–416 constitute a Radical SAM core domain; that stretch reads RESAYSGWVS…IALQERIQAE (237 aa). Residues 419–486 form the TRAM domain; sequence KELVGTTQEL…PFFLIADGPL (68 aa).

It belongs to the methylthiotransferase family. MiaB subfamily. As to quaternary structure, monomer. It depends on [4Fe-4S] cluster as a cofactor.

Its subcellular location is the cytoplasm. The enzyme catalyses N(6)-dimethylallyladenosine(37) in tRNA + (sulfur carrier)-SH + AH2 + 2 S-adenosyl-L-methionine = 2-methylsulfanyl-N(6)-dimethylallyladenosine(37) in tRNA + (sulfur carrier)-H + 5'-deoxyadenosine + L-methionine + A + S-adenosyl-L-homocysteine + 2 H(+). Functionally, catalyzes the methylthiolation of N6-(dimethylallyl)adenosine (i(6)A), leading to the formation of 2-methylthio-N6-(dimethylallyl)adenosine (ms(2)i(6)A) at position 37 in tRNAs that read codons beginning with uridine. This is tRNA-2-methylthio-N(6)-dimethylallyladenosine synthase from Corynebacterium urealyticum (strain ATCC 43042 / DSM 7109).